Reading from the N-terminus, the 1085-residue chain is Kinesin-like protein cut7 (1085 aa).

Positions 1 to 70 are disordered; it reads MAPRVAPGGS…TDHALHDENE (70 aa). Over residues 24 to 37 the composition is skewed to polar residues; sequence PVSTPNSHFRSASN. The region spanning 72 to 421 is the Kinesin motor domain; that stretch reads NINVVVRVRG…LEYAARAKSI (350 aa). 159-166 provides a ligand contact to ATP; sequence GQTGTGKT. Coiled-coil stretches lie at residues 436–604, 715–740, and 897–955; these read LIKD…WNLK, ISSE…LRSL, and LALA…DSIK. 2 consecutive repeats follow at residues 987 to 998 and 999 to 1010; these read DESLCNLETTIE and DTSLVKLETTGD. Phosphothreonine; by CDC2 is present on Thr-1011. Positions 1049–1085 are disordered; sequence YTSSNQTNEPDVYDKPSNSSRTSLLRSSRSAYSKMKR. The span at 1065–1078 shows a compositional bias: low complexity; the sequence is SNSSRTSLLRSSRS.

This sequence belongs to the TRAFAC class myosin-kinesin ATPase superfamily. Kinesin family. BimC subfamily.

The protein localises to the cytoplasm. It localises to the cytoskeleton. The protein resides in the microtubule organizing center. It is found in the spindle pole body. Functionally, could be a spindle pole body motor. On transition from G2 to M phase of the cell cycle, the spindle pole body duplicates; the daughter pole bodies seed microtubules which interdigitate to form a short spindle that elongates to span the nucleus at metaphase. Mutations at cut7 block spindle formation. The protein is Kinesin-like protein cut7 (cut7) of Schizosaccharomyces pombe (strain 972 / ATCC 24843) (Fission yeast).